We begin with the raw amino-acid sequence, 450 residues long: Tubulin alpha chain (450 aa).

Position 11 (glutamine 11) interacts with GTP. N6-acetyllysine is present on lysine 40. Residues glutamate 71, serine 140, glycine 144, threonine 145, threonine 179, asparagine 206, and asparagine 228 each coordinate GTP. Glutamate 71 contributes to the Mg(2+) binding site. Glutamate 254 is an active-site residue.

It belongs to the tubulin family. Dimer of alpha and beta chains. A typical microtubule is a hollow water-filled tube with an outer diameter of 25 nm and an inner diameter of 15 nM. Alpha-beta heterodimers associate head-to-tail to form protofilaments running lengthwise along the microtubule wall with the beta-tubulin subunit facing the microtubule plus end conferring a structural polarity. Microtubules usually have 13 protofilaments but different protofilament numbers can be found in some organisms and specialized cells. It depends on Mg(2+) as a cofactor. Post-translationally, acetylation of alpha chains at Lys-40 stabilizes microtubules and affects affinity and processivity of microtubule motors. This modification has a role in multiple cellular functions, ranging from cell motility, cell cycle progression or cell differentiation to intracellular trafficking and signaling.

It is found in the cytoplasm. Its subcellular location is the cytoskeleton. It catalyses the reaction GTP + H2O = GDP + phosphate + H(+). Its function is as follows. Tubulin is the major constituent of microtubules, a cylinder consisting of laterally associated linear protofilaments composed of alpha- and beta-tubulin heterodimers. Microtubules grow by the addition of GTP-tubulin dimers to the microtubule end, where a stabilizing cap forms. Below the cap, tubulin dimers are in GDP-bound state, owing to GTPase activity of alpha-tubulin. This Oxytricha granulifera (Ciliate) protein is Tubulin alpha chain.